The sequence spans 470 residues: Glutamate--tRNA ligase 2 (470 aa).

Positions 10 to 20 (PSPTGFLHIGS) match the 'HIGH' region motif. Positions 239-243 (KLSKR) match the 'KMSKS' region motif. K242 contacts ATP.

It belongs to the class-I aminoacyl-tRNA synthetase family. Glutamate--tRNA ligase type 1 subfamily. In terms of assembly, monomer.

The protein resides in the cytoplasm. The catalysed reaction is tRNA(Glu) + L-glutamate + ATP = L-glutamyl-tRNA(Glu) + AMP + diphosphate. In terms of biological role, catalyzes the attachment of glutamate to tRNA(Glu) in a two-step reaction: glutamate is first activated by ATP to form Glu-AMP and then transferred to the acceptor end of tRNA(Glu). The sequence is that of Glutamate--tRNA ligase 2 from Rickettsia prowazekii (strain Madrid E).